Here is a 160-residue protein sequence, read N- to C-terminus: MGVTKKPDLNDPVLRAKLAKGMGHNYYGEPAWPNDLLYIFPVVILGTIACNVGLAVLEPSMIGEPADPFATPLEILPEWYFFPVFQILRTVPNKLLGVLLMVSVPTGLLTVPFLENVNKFQNPFRRPVATTVFLIGTAVALWLGIGATLPIDKSLTLGLF.

3 helical membrane passes run Leu36–Val56, Leu95–Glu115, and Thr131–Ile151.

This sequence belongs to the cytochrome b family. PetD subfamily. The 4 large subunits of the cytochrome b6-f complex are cytochrome b6, subunit IV (17 kDa polypeptide, petD), cytochrome f and the Rieske protein, while the 4 small subunits are petG, petL, petM and petN. The complex functions as a dimer.

The protein resides in the plastid. Its subcellular location is the chloroplast thylakoid membrane. In terms of biological role, component of the cytochrome b6-f complex, which mediates electron transfer between photosystem II (PSII) and photosystem I (PSI), cyclic electron flow around PSI, and state transitions. This Saccharum hybrid (Sugarcane) protein is Cytochrome b6-f complex subunit 4.